Consider the following 121-residue polypeptide: N-alpha-acetyltransferase 38, NatC auxiliary subunit (121 aa).

A Sm domain is found at 40 to 113 (PGRRKLQKWL…IVSLSIDEPD (74 aa)).

It belongs to the snRNP Sm proteins family. Component of the N-terminal acetyltransferase C (NatC) complex, which is composed of Naa35, Sbat/Naa38 and Naa30A. Interacts with Smn and Hez; along with Hez and Vlet, may form an accessory subcomplex involved in SMN complex function.

The protein resides in the cytoplasm. The protein localises to the nucleus. Its function is as follows. Auxiliary component of the N-terminal acetyltransferase C (NatC) complex which catalyzes acetylation of N-terminal methionine residues. May have an accessory function in the survival motor neuron (SMN) complex. This chain is N-alpha-acetyltransferase 38, NatC auxiliary subunit, found in Drosophila melanogaster (Fruit fly).